The sequence spans 47 residues: uncharacterized protein (47 aa).

This is an uncharacterized protein from Bacillus subtilis (strain 168).